The chain runs to 391 residues: GTPase Obg (391 aa).

The 159-residue stretch at 1 to 159 (MKFIDEALIR…RDLQLELMLL (159 aa)) folds into the Obg domain. The OBG-type G domain occupies 160-333 (ADVGMLGLPN…LTRDIMDFIE (174 aa)). GTP is bound by residues 166–173 (GLPNAGKS), 191–195 (FTTLV), 213–216 (DIPG), 283–286 (NKID), and 314–316 (SAA). The Mg(2+) site is built by S173 and T193. The tract at residues 361–391 (QNPITEDDWDDLDDDGWTEEDDEGVEFIYKP) is disordered. Positions 365 to 385 (TEDDWDDLDDDGWTEEDDEGV) are enriched in acidic residues.

This sequence belongs to the TRAFAC class OBG-HflX-like GTPase superfamily. OBG GTPase family. As to quaternary structure, monomer. It depends on Mg(2+) as a cofactor.

It is found in the cytoplasm. Functionally, an essential GTPase which binds GTP, GDP and possibly (p)ppGpp with moderate affinity, with high nucleotide exchange rates and a fairly low GTP hydrolysis rate. Plays a role in control of the cell cycle, stress response, ribosome biogenesis and in those bacteria that undergo differentiation, in morphogenesis control. The polypeptide is GTPase Obg (Glaesserella parasuis serovar 5 (strain SH0165) (Haemophilus parasuis)).